A 146-amino-acid polypeptide reads, in one-letter code: Anti-sigma F factor (146 aa).

It belongs to the anti-sigma-factor family.

It catalyses the reaction L-seryl-[protein] + ATP = O-phospho-L-seryl-[protein] + ADP + H(+). It carries out the reaction L-threonyl-[protein] + ATP = O-phospho-L-threonyl-[protein] + ADP + H(+). Binds to sigma F and blocks its ability to form an RNA polymerase holoenzyme (E-sigma F). Phosphorylates SpoIIAA on a serine residue. This phosphorylation may enable SpoIIAA to act as an anti-anti-sigma factor that counteracts SpoIIAB and thus releases sigma F from inhibition. In Oceanobacillus iheyensis (strain DSM 14371 / CIP 107618 / JCM 11309 / KCTC 3954 / HTE831), this protein is Anti-sigma F factor.